An 82-amino-acid chain; its full sequence is MGREFGNLTRMRHVISYSLSPFEQRAHPHVFTKGIPNVLRRFRESFFRVAPQFVVFYLIYTWGTEEFERSKRKNPAAYENDK.

Residues 1 to 39 (MGREFGNLTRMRHVISYSLSPFEQRAHPHVFTKGIPNVL) lie on the Mitochondrial matrix side of the membrane. Position 16 is a phosphoserine (Ser-16). N6-acetyllysine; alternate is present on Lys-33. Lys-33 is modified (N6-succinyllysine; alternate). The chain crosses the membrane as a helical span at residues 40–68 (RRFRESFFRVAPQFVVFYLIYTWGTEEFE). Topologically, residues 69–82 (RSKRKNPAAYENDK) are mitochondrial intermembrane.

It belongs to the UQCRQ/QCR8 family. In terms of assembly, component of the ubiquinol-cytochrome c oxidoreductase (cytochrome b-c1 complex, complex III, CIII), a multisubunit enzyme composed of 11 subunits. The complex is composed of 3 respiratory subunits cytochrome b, cytochrome c1 and Rieske protein UQCRFS1, 2 core protein subunits UQCRC1/QCR1 and UQCRC2/QCR2, and 6 low-molecular weight protein subunits UQCRH/QCR6, UQCRB/QCR7, UQCRQ/QCR8, UQCR10/QCR9, UQCR11/QCR10 and subunit 9, the cleavage product of Rieske protein UQCRFS1. The complex exists as an obligatory dimer and forms supercomplexes (SCs) in the inner mitochondrial membrane with NADH-ubiquinone oxidoreductase (complex I, CI) and cytochrome c oxidase (complex IV, CIV), resulting in different assemblies (supercomplex SCI(1)III(2)IV(1) and megacomplex MCI(2)III(2)IV(2)). Interacts with UQCC6.

The protein resides in the mitochondrion inner membrane. Component of the ubiquinol-cytochrome c oxidoreductase, a multisubunit transmembrane complex that is part of the mitochondrial electron transport chain which drives oxidative phosphorylation. The respiratory chain contains 3 multisubunit complexes succinate dehydrogenase (complex II, CII), ubiquinol-cytochrome c oxidoreductase (cytochrome b-c1 complex, complex III, CIII) and cytochrome c oxidase (complex IV, CIV), that cooperate to transfer electrons derived from NADH and succinate to molecular oxygen, creating an electrochemical gradient over the inner membrane that drives transmembrane transport and the ATP synthase. The cytochrome b-c1 complex catalyzes electron transfer from ubiquinol to cytochrome c, linking this redox reaction to translocation of protons across the mitochondrial inner membrane, with protons being carried across the membrane as hydrogens on the quinol. In the process called Q cycle, 2 protons are consumed from the matrix, 4 protons are released into the intermembrane space and 2 electrons are passed to cytochrome c. The protein is Cytochrome b-c1 complex subunit 8 (UQCRQ) of Pongo abelii (Sumatran orangutan).